A 35-amino-acid chain; its full sequence is MSDIN-like toxin proprotein 6 (35 aa).

Positions 1–10 (MSDINGTRLP) are excised as a propeptide. The segment at residues 11-20 (IPGLIPLGIP) is a cross-link (cyclopeptide (Ile-Pro)). Residues 21-35 (CVSDDVNPTLTRGER) constitute a propeptide that is removed on maturation.

It belongs to the MSDIN fungal toxin family. In terms of processing, processed by the macrocyclase-peptidase enzyme POPB to yield a toxic cyclic decapeptide. POPB first removes 10 residues from the N-terminus. Conformational trapping of the remaining peptide forces the enzyme to release this intermediate rather than proceed to macrocyclization. The enzyme rebinds the remaining peptide in a different conformation and catalyzes macrocyclization of the N-terminal 10 residues.

In terms of biological role, probable toxin that belongs to the MSDIN-like toxin family responsible for a large number of food poisoning cases and deaths. This Amanita bisporigera (Destroying angel) protein is MSDIN-like toxin proprotein 6.